A 634-amino-acid chain; its full sequence is 1-phosphatidylinositol 4,5-bisphosphate phosphodiesterase zeta-1 (634 aa).

The 36-residue stretch at 35-70 (CNTIHVKYIFKDNDRLKQGRITIEEFRTIYRIITYR) folds into the EF-hand domain. The PI-PLC X-box domain occupies 155 to 299 (QDMTHPLTDY…LKFKILVRNK (145 aa)). Catalysis depends on residues His170 and His215. Residues 312-345 (GSDMHGKVEEFEEEEEIEQEEDGSGAKEPEPVGD) are disordered. Positions 321 to 334 (EFEEEEEIEQEEDG) are enriched in acidic residues. One can recognise a PI-PLC Y-box domain in the interval 376 to 492 (LSDLVIYTKV…GYVLKPRFLR (117 aa)). Residues 492–615 (RDKKTKFNPH…RGYRRVPLFS (124 aa)) enclose the C2 domain.

In terms of assembly, interacts (via its C2 domain) with PtdIns(3)P and, to a lesser extent, PtdIns(5)P in vitro. Requires Ca(2+) as cofactor.

The protein resides in the nucleus. It is found in the cytoplasm. Its subcellular location is the perinuclear region. The catalysed reaction is a 1,2-diacyl-sn-glycero-3-phospho-(1D-myo-inositol-4,5-bisphosphate) + H2O = 1D-myo-inositol 1,4,5-trisphosphate + a 1,2-diacyl-sn-glycerol + H(+). Its function is as follows. The production of the second messenger molecules diacylglycerol (DAG) and inositol 1,4,5-trisphosphate (IP3) is mediated by activated phosphatidylinositol-specific phospholipase C enzymes. In vitro, hydrolyzes PtdIns(4,5)P2 in a Ca(2+)-dependent manner. Triggers intracellular Ca(2+) oscillations in oocytes solely during M phase and is involved in inducing oocyte activation and initiating embryonic development up to the blastocyst stage. Is therefore a strong candidate for the egg-activating soluble sperm factor that is transferred from the sperm into the egg cytoplasm following gamete membrane fusion. May exert an inhibitory effect on phospholipase-C-coupled processes that depend on calcium ions and protein kinase C, including CFTR trafficking and function. The chain is 1-phosphatidylinositol 4,5-bisphosphate phosphodiesterase zeta-1 from Bos taurus (Bovine).